Consider the following 98-residue polypeptide: Biogenesis of lysosome-related organelles complex 1 subunit SNN1 (98 aa).

Positions 55–98 form a coiled coil; sequence MDEQELLQEEGSLKEELARVNQLKKRLDKLTELYAELARKCGAL.

It belongs to the SNAPIN family. As to quaternary structure, component of the biogenesis of lysosome-related organelles complex-1 (BLOC-1).

The protein resides in the endosome. Component of the biogenesis of lysosome-related organelles complex-1 (BLOC-1), a complex involved in endosomal cargo sorting. The protein is Biogenesis of lysosome-related organelles complex 1 subunit SNN1 (SNN1) of Eremothecium gossypii (strain ATCC 10895 / CBS 109.51 / FGSC 9923 / NRRL Y-1056) (Yeast).